We begin with the raw amino-acid sequence, 138 residues long: uncharacterized protein (138 aa).

Residue S110 is modified to Phosphoserine.

It localises to the cytoplasm. Its subcellular location is the nucleus. This is an uncharacterized protein from Schizosaccharomyces pombe (strain 972 / ATCC 24843) (Fission yeast).